A 1249-amino-acid chain; its full sequence is Protein transport protein Sec31A (1249 aa).

7 WD repeats span residues 4 to 47 (KEID…EIFE), 64 to 111 (SSSH…AGDK), 120 to 160 (KHTG…TPMT), 166 to 206 (QPPE…PIIK), 209 to 254 (DHSN…SPLR), 258 to 298 (NHAR…VLYE), and 301 to 342 (TNTQ…DGLR). Positions 161–470 (PGAKTQPPED…IDASQTDFEK (310 aa)) are interaction with SEC13. Residues 397-429 (SFSFGGKLVTFENVTGQPQQGAEQPRRQPVFIS) form a WD 8; interaction with SEC13 repeat. Arg423 is modified (asymmetric dimethylarginine). Ser526 and Ser531 each carry phosphoserine. A Glycyl lysine isopeptide (Lys-Gly) (interchain with G-Cter in ubiquitin) cross-link involves residue Lys647. Disordered stretches follow at residues 790–829 (QGRS…VQSQ), 842–940 (TTWS…RYPN), and 954–1123 (PHMY…PIGN). A compositionally biased stretch (polar residues) spans 796 to 805 (GQESSRSSYE). Position 799 is a phosphoserine (Ser799). Residues 800 to 1142 (SRSSYEGQPL…TEKITKKPIP (343 aa)) form an interaction with PDCD6 region. The ALG-2-binding site motif-2 (ABS-2) signature appears at 873–879 (GFIMHGN). The segment covering 898 to 908 (QPPPYPQPQPY) has biased composition (pro residues). Low complexity-rich tracts occupy residues 961-970 (PASSPTSSSA) and 991-1007 (PSSS…GTPP). Polar residues predominate over residues 1013 to 1024 (PASQRTGPQNGW). Residues 1056-1074 (PGGDPQPQGLQQQPSASGP) show a composition bias toward low complexity. The residue at position 1190 (Thr1190) is a Phosphothreonine. A Phosphoserine modification is found at Ser1192. Lys1246 is covalently cross-linked (Glycyl lysine isopeptide (Lys-Gly) (interchain with G-Cter in ubiquitin)).

The protein belongs to the WD repeat SEC31 family. COPII is composed of at least 5 proteins: the SEC23/24 complex, the SEC13/31 complex and SAR1. SEC13 and SEC31 make a 2:2 tetramer that forms the edge element of the COPII outer coat. The tetramer self-assembles in multiple copies to form the complete polyhedral cage. Interacts (via WD 8) with SEC13. Interacts with PDCD6; interaction takes place in response to cytosolic calcium increase and leads to bridge together the BCR(KLHL12) complex and SEC31A, leading to monoubiquitination. Interacts with KLHL12. Post-translationally, monoubiquitinated by the BCR(KLHL12) E3 ubiquitin ligase complex, leading to regulate the size of COPII coats. Ubiquitously expressed.

It localises to the cytoplasm. The protein localises to the cytoplasmic vesicle. Its subcellular location is the COPII-coated vesicle membrane. It is found in the endoplasmic reticulum membrane. Component of the coat protein complex II (COPII) which promotes the formation of transport vesicles from the endoplasmic reticulum (ER). The coat has two main functions, the physical deformation of the endoplasmic reticulum membrane into vesicles and the selection of cargo molecules. This is Protein transport protein Sec31A (Sec31a) from Rattus norvegicus (Rat).